The sequence spans 517 residues: 3-hydroxyphenylacetate 6-hydroxylase (517 aa).

C449 contacts heme.

Belongs to the cytochrome P450 family.

It catalyses the reaction 3-hydroxyphenylacetate + NADH + O2 + H(+) = homogentisate + NAD(+) + H2O. The enzyme catalyses 3-hydroxyphenylacetate + NADPH + O2 + H(+) = homogentisate + NADP(+) + H2O. The catalysed reaction is 3,4-dihydroxyphenylacetate + NADH + O2 + H(+) = 2,4,5-trihydroxyphenylacetate + NAD(+) + H2O. It carries out the reaction 3,4-dihydroxyphenylacetate + NADPH + O2 + H(+) = 2,4,5-trihydroxyphenylacetate + NADP(+) + H2O. It functions in the pathway aromatic compound metabolism; phenylacetate degradation. Catalyzes the hydroxylation of 3-hydroxyphenylacetate and 3,4-dihydroxyphenylacetate to 2,5-dihydroxyphenylacetate (homogentisate) and 2,4,5-trihydroxyphenylacetate, respectively. Both of these compounds are used as substrate by homogentisate dioxygenase in the homogentisate pathway. The homogentisate pathway is used to catabolize phenylacetate and use it as a carbon source. Can also catalyze the hydroxylation of phenylacetate to 2-hydroxyphenylacetate at low efficiency to compensate for loss of phacA. This is 3-hydroxyphenylacetate 6-hydroxylase (phacB) from Emericella nidulans (Aspergillus nidulans).